We begin with the raw amino-acid sequence, 244 residues long: 14-3-3 protein beta/alpha (244 aa).

The residue at position 1 (M1) is an N-acetylmethionine. Residue S184 is modified to Phosphoserine.

The protein belongs to the 14-3-3 family. As to quaternary structure, homodimer, and heterodimer with other family members. Post-translationally, phosphorylated.

The protein resides in the cytoplasm. In terms of biological role, adapter protein implicated in the regulation of a large spectrum of both general and specialized signaling pathways. Binds to a large number of partners, usually by recognition of a phosphoserine or phosphothreonine motif. Binding generally results in the modulation of the activity of the binding partner. The chain is 14-3-3 protein beta/alpha (YWHAB) from Gallus gallus (Chicken).